The primary structure comprises 396 residues: 1-deoxy-D-xylulose 5-phosphate reductoisomerase (396 aa).

Residues T13, G14, S15, I16, and N127 each coordinate NADPH. 1-deoxy-D-xylulose 5-phosphate is bound at residue K128. E129 contributes to the NADPH binding site. D153 provides a ligand contact to Mn(2+). 1-deoxy-D-xylulose 5-phosphate-binding residues include S154, E155, S184, and H207. E155 lines the Mn(2+) pocket. NADPH is bound at residue G213. S220, N225, K226, and E229 together coordinate 1-deoxy-D-xylulose 5-phosphate. Residue E229 coordinates Mn(2+).

Belongs to the DXR family. It depends on Mg(2+) as a cofactor. The cofactor is Mn(2+).

The catalysed reaction is 2-C-methyl-D-erythritol 4-phosphate + NADP(+) = 1-deoxy-D-xylulose 5-phosphate + NADPH + H(+). It functions in the pathway isoprenoid biosynthesis; isopentenyl diphosphate biosynthesis via DXP pathway; isopentenyl diphosphate from 1-deoxy-D-xylulose 5-phosphate: step 1/6. Its function is as follows. Catalyzes the NADPH-dependent rearrangement and reduction of 1-deoxy-D-xylulose-5-phosphate (DXP) to 2-C-methyl-D-erythritol 4-phosphate (MEP). This Pseudomonas fluorescens (strain ATCC BAA-477 / NRRL B-23932 / Pf-5) protein is 1-deoxy-D-xylulose 5-phosphate reductoisomerase.